Here is a 197-residue protein sequence, read N- to C-terminus: Elongation factor Ts (197 aa).

Residues 81-84 (TDFV) are involved in Mg(2+) ion dislocation from EF-Tu.

It belongs to the EF-Ts family.

It is found in the cytoplasm. Its function is as follows. Associates with the EF-Tu.GDP complex and induces the exchange of GDP to GTP. It remains bound to the aminoacyl-tRNA.EF-Tu.GTP complex up to the GTP hydrolysis stage on the ribosome. In Sulfurihydrogenibium sp. (strain YO3AOP1), this protein is Elongation factor Ts.